The following is a 298-amino-acid chain: GTPase Era (298 aa).

Residues 3 to 170 (KSGFVAILGR…IKLLTDNLEE (168 aa)) enclose the Era-type G domain. The segment at 11–18 (GRPNVGKS) is G1. A GTP-binding site is contributed by 11–18 (GRPNVGKS). The tract at residues 37–41 (QTTRN) is G2. A G3 region spans residues 58 to 61 (DTPG). Residues 58-62 (DTPGI) and 120-123 (NKID) each bind GTP. The tract at residues 120 to 123 (NKID) is G4. Positions 149–151 (ISA) are G5. The region spanning 201 to 279 (TQQEVPHSVA…YLETWVKVKK (79 aa)) is the KH type-2 domain.

This sequence belongs to the TRAFAC class TrmE-Era-EngA-EngB-Septin-like GTPase superfamily. Era GTPase family. As to quaternary structure, monomer.

Its subcellular location is the cytoplasm. It is found in the cell membrane. An essential GTPase that binds both GDP and GTP, with rapid nucleotide exchange. Plays a role in 16S rRNA processing and 30S ribosomal subunit biogenesis and possibly also in cell cycle regulation and energy metabolism. The sequence is that of GTPase Era from Streptococcus pyogenes serotype M2 (strain MGAS10270).